Here is a 342-residue protein sequence, read N- to C-terminus: Holliday junction branch migration complex subunit RuvB (342 aa).

The segment at 4–182 is large ATPase domain (RuvB-L); the sequence is TDRLLSAGRR…FGIPIRLQFY (179 aa). The ATP site is built by Leu21, Arg22, Gly63, Lys66, Thr67, Thr68, Arg172, Tyr182, and Arg219. Position 67 (Thr67) interacts with Mg(2+). A small ATPAse domain (RuvB-S) region spans residues 183–253; sequence TVEELERVVS…VADQSLNRLE (71 aa). The head domain (RuvB-H) stretch occupies residues 256–342; the sequence is NLGLDAMDRR…EAGQDGLFDV (87 aa). DNA is bound by residues Arg292, Arg311, and Arg316.

Belongs to the RuvB family. In terms of assembly, homohexamer. Forms an RuvA(8)-RuvB(12)-Holliday junction (HJ) complex. HJ DNA is sandwiched between 2 RuvA tetramers; dsDNA enters through RuvA and exits via RuvB. An RuvB hexamer assembles on each DNA strand where it exits the tetramer. Each RuvB hexamer is contacted by two RuvA subunits (via domain III) on 2 adjacent RuvB subunits; this complex drives branch migration. In the full resolvosome a probable DNA-RuvA(4)-RuvB(12)-RuvC(2) complex forms which resolves the HJ.

It localises to the cytoplasm. The enzyme catalyses ATP + H2O = ADP + phosphate + H(+). Its function is as follows. The RuvA-RuvB-RuvC complex processes Holliday junction (HJ) DNA during genetic recombination and DNA repair, while the RuvA-RuvB complex plays an important role in the rescue of blocked DNA replication forks via replication fork reversal (RFR). RuvA specifically binds to HJ cruciform DNA, conferring on it an open structure. The RuvB hexamer acts as an ATP-dependent pump, pulling dsDNA into and through the RuvAB complex. RuvB forms 2 homohexamers on either side of HJ DNA bound by 1 or 2 RuvA tetramers; 4 subunits per hexamer contact DNA at a time. Coordinated motions by a converter formed by DNA-disengaged RuvB subunits stimulates ATP hydrolysis and nucleotide exchange. Immobilization of the converter enables RuvB to convert the ATP-contained energy into a lever motion, pulling 2 nucleotides of DNA out of the RuvA tetramer per ATP hydrolyzed, thus driving DNA branch migration. The RuvB motors rotate together with the DNA substrate, which together with the progressing nucleotide cycle form the mechanistic basis for DNA recombination by continuous HJ branch migration. Branch migration allows RuvC to scan DNA until it finds its consensus sequence, where it cleaves and resolves cruciform DNA. The protein is Holliday junction branch migration complex subunit RuvB of Rhizorhabdus wittichii (strain DSM 6014 / CCUG 31198 / JCM 15750 / NBRC 105917 / EY 4224 / RW1) (Sphingomonas wittichii).